The primary structure comprises 335 residues: Polyprenol dehydrogenase (335 aa).

Ile55, Tyr208, Lys212, and Thr245 together coordinate NAD(+). Residue Tyr208 is the Proton acceptor of the active site.

It belongs to the short-chain dehydrogenases/reductases (SDR) family.

The protein localises to the lipid droplet. The protein resides in the secreted. The catalysed reaction is a di-trans,poly-cis-polyprenol + NAD(+) = a di-trans,poly-cis-polyprenal + NADH + H(+). It carries out the reaction a di-trans,poly-cis-polyprenol + NADP(+) = a di-trans,poly-cis-polyprenal + NADPH + H(+). The enzyme catalyses a di-trans,poly-cis-dolichol + NADP(+) = a di-trans,poly-cis-dolichal + NADPH + H(+). It catalyses the reaction a di-trans,poly-cis-dolichol + NAD(+) = a di-trans,poly-cis-dolichal + NADH + H(+). It participates in protein modification; protein glycosylation. Its function is as follows. Oxidoreductase that plays a key role in early steps of protein N-linked glycosylation by mediating two non-consecutive steps in dolichol biosynthesis. Acts both as a NAD(+)-dependent dehydrogenase and as a NADPH-dependent reductase during the conversion of polyprenol into dolichol. First catalyzes the NAD(+)-dependent dehydrogenation of polyprenol into polyprenal; polyprenal is then reduced into dolichal by SRD5A3. It then catalyzes the NADPH-dependent reduction of dolichal into dolichol. May also acts as a positive regulator of starvation-induced autophagy. In Mus musculus (Mouse), this protein is Polyprenol dehydrogenase (Dhrsx).